The following is a 115-amino-acid chain: Large ribosomal subunit protein bL21 (115 aa).

It belongs to the bacterial ribosomal protein bL21 family. Part of the 50S ribosomal subunit. Contacts protein L20.

This protein binds to 23S rRNA in the presence of protein L20. The polypeptide is Large ribosomal subunit protein bL21 (Coxiella burnetii (strain Dugway 5J108-111)).